The chain runs to 225 residues: 7-cyano-7-deazaguanine synthase (225 aa).

Residue 10-20 (FSGGQDSTTLA) participates in ATP binding. The Zn(2+) site is built by Cys190, Cys205, Cys208, and Cys211.

This sequence belongs to the QueC family. The cofactor is Zn(2+).

It carries out the reaction 7-carboxy-7-deazaguanine + NH4(+) + ATP = 7-cyano-7-deazaguanine + ADP + phosphate + H2O + H(+). It functions in the pathway purine metabolism; 7-cyano-7-deazaguanine biosynthesis. Functionally, catalyzes the ATP-dependent conversion of 7-carboxy-7-deazaguanine (CDG) to 7-cyano-7-deazaguanine (preQ(0)). The chain is 7-cyano-7-deazaguanine synthase from Helicobacter pylori (strain J99 / ATCC 700824) (Campylobacter pylori J99).